A 122-amino-acid polypeptide reads, in one-letter code: Large ribosomal subunit protein uL14 (122 aa).

It belongs to the universal ribosomal protein uL14 family. In terms of assembly, part of the 50S ribosomal subunit. Forms a cluster with proteins L3 and L19. In the 70S ribosome, L14 and L19 interact and together make contacts with the 16S rRNA in bridges B5 and B8.

Binds to 23S rRNA. Forms part of two intersubunit bridges in the 70S ribosome. The protein is Large ribosomal subunit protein uL14 of Picosynechococcus sp. (strain ATCC 27264 / PCC 7002 / PR-6) (Agmenellum quadruplicatum).